Here is a 66-residue protein sequence, read N- to C-terminus: Beta-mammal toxin Cv2 (66 aa).

Positions Lys-1–Asn-66 constitute an LCN-type CS-alpha/beta domain. Intrachain disulfides connect Cys-12–Cys-65, Cys-16–Cys-41, Cys-25–Cys-46, and Cys-29–Cys-48.

Expressed by the venom gland.

It localises to the secreted. With respect to regulation, is susceptible to be slightly neutralized by human antibodies scFvs 10FG2. Functionally, beta toxins bind voltage-independently at site-4 of sodium channels (Nav) and reduces peak current and shifts the voltage of activation toward more negative potentials thereby affecting sodium channel activation and promoting spontaneous and repetitive firing. This toxin is slightly toxic to mice. The sequence is that of Beta-mammal toxin Cv2 from Centruroides villegasi (Scorpion).